Reading from the N-terminus, the 237-residue chain is Ribonuclease PH (237 aa).

Residues Arg86 and 124 to 126 each bind phosphate; that span reads GTR.

Belongs to the RNase PH family. As to quaternary structure, homohexameric ring arranged as a trimer of dimers.

The enzyme catalyses tRNA(n+1) + phosphate = tRNA(n) + a ribonucleoside 5'-diphosphate. Phosphorolytic 3'-5' exoribonuclease that plays an important role in tRNA 3'-end maturation. Removes nucleotide residues following the 3'-CCA terminus of tRNAs; can also add nucleotides to the ends of RNA molecules by using nucleoside diphosphates as substrates, but this may not be physiologically important. Probably plays a role in initiation of 16S rRNA degradation (leading to ribosome degradation) during starvation. This Rhodopseudomonas palustris (strain HaA2) protein is Ribonuclease PH.